A 148-amino-acid polypeptide reads, in one-letter code: Small ribosomal subunit protein eS19G (148 aa).

This sequence belongs to the eukaryotic ribosomal protein eS19 family.

Functionally, elimination of the ALEP-1 gene from all somatic cells in its fully activate state may represent an alternative way to gene regulation. In Ascaris suum (Pig roundworm), this protein is Small ribosomal subunit protein eS19G (RPS19G).